The primary structure comprises 162 residues: Regulator of sigma D (162 aa).

It belongs to the Rsd/AlgQ family. In terms of assembly, interacts with RpoD.

Its subcellular location is the cytoplasm. In terms of biological role, binds RpoD and negatively regulates RpoD-mediated transcription activation by preventing the interaction between the primary sigma factor RpoD with the catalytic core of the RNA polymerase and with promoter DNA. May be involved in replacement of the RNA polymerase sigma subunit from RpoD to RpoS during the transition from exponential growth to the stationary phase. In Salmonella paratyphi A (strain ATCC 9150 / SARB42), this protein is Regulator of sigma D.